The following is a 519-amino-acid chain: MPPKKKGKRGPSAKTKEKETVRVASEGVTEQTKDFYTVQIRDLEKRLERYQSKWDEICAKEQLKEAQYEQLSNDKKEIVSFLKRTLNQRMDEIADLNDQLLGLQQAKDAEKDAYESQLTQVRHELQDTKERLTSENMLLAGKLASLEEFRVQKEELMGKFAALEEKVKEQEQEHKEAMYILEKKVVLDKDRLKKEMVQRVSTVAAEFRRVSNNQMAETTKRAIRENVSISLQLDKMSDKSIELISENDLLKDRNSELTKQLEMLEENEKELVKNNLSNQKVIRMLTDKCQQQQEILTLLEHTQHALNELQSQHHNLKDESQQLKQKLVSLEDDLQRVTQEKEGLSRQLEEEKQRTLAVDMILSQAAAFLKDMLLTHSEDETEGMQLERRNKMLQQLQLLLDSSATLGLGSSLHEFETKQGHSLKSLKTNRQPVSPVLKGPGVTAHYRIGDLGLVPRQDVSNAVLSKTAMLSKITRLGPLRGTHGISKELLSWTQEEKQIKHSALPEISPGAPSKLLMAK.

Basic residues predominate over residues 1-11 (MPPKKKGKRGP). The segment at 1-25 (MPPKKKGKRGPSAKTKEKETVRVAS) is disordered. Coiled-coil stretches lie at residues 28 to 185 (VTEQ…EKKV) and 241 to 356 (IELI…QRTL).

It belongs to the CFAP157 family.

It is found in the cytoplasm. Its subcellular location is the cytoskeleton. The protein resides in the cilium basal body. Specifically required during spermatogenesis for flagellum morphogenesis and sperm motility. The polypeptide is Cilia- and flagella-associated protein 157 (Xenopus tropicalis (Western clawed frog)).